Here is a 430-residue protein sequence, read N- to C-terminus: Maltoporin (430 aa).

The signal sequence occupies residues 1-23; it reads MNNKKTLLAVAISGMMFATSAAA.

Belongs to the porin LamB (TC 1.B.3) family. Homotrimer formed of three 18-stranded antiparallel beta-barrels, containing three independent channels.

The protein resides in the cell outer membrane. It carries out the reaction beta-maltose(in) = beta-maltose(out). Involved in the transport of maltose and maltodextrins. This is Maltoporin from Actinobacillus succinogenes (strain ATCC 55618 / DSM 22257 / CCUG 43843 / 130Z).